The sequence spans 93 residues: Small ribosomal subunit protein bS20c (93 aa).

This sequence belongs to the bacterial ribosomal protein bS20 family.

Its subcellular location is the plastid. The protein resides in the chloroplast. In terms of biological role, binds directly to 16S ribosomal RNA. This is Small ribosomal subunit protein bS20c from Trieres chinensis (Marine centric diatom).